The following is a 487-amino-acid chain: Probable cobyric acid synthase (487 aa).

Residues 249 to 435 (DVDIAVVRFP…LHGIFNNASF (187 aa)) enclose the GATase cobBQ-type domain. Cys-328 (nucleophile) is an active-site residue. His-427 is a catalytic residue.

Belongs to the CobB/CobQ family. CobQ subfamily.

It participates in cofactor biosynthesis; adenosylcobalamin biosynthesis. In terms of biological role, catalyzes amidations at positions B, D, E, and G on adenosylcobyrinic A,C-diamide. NH(2) groups are provided by glutamine, and one molecule of ATP is hydrogenolyzed for each amidation. This is Probable cobyric acid synthase from Methanocella arvoryzae (strain DSM 22066 / NBRC 105507 / MRE50).